A 171-amino-acid chain; its full sequence is Shikimate kinase (171 aa).

An ATP-binding site is contributed by 14 to 19 (GAGKST). Ser18 contacts Mg(2+). Asp36, Arg60, and Gly82 together coordinate substrate. Position 120 (Arg120) interacts with ATP. Arg139 is a binding site for substrate. Gln156 lines the ATP pocket.

It belongs to the shikimate kinase family. In terms of assembly, monomer. Mg(2+) serves as cofactor.

The protein resides in the cytoplasm. The enzyme catalyses shikimate + ATP = 3-phosphoshikimate + ADP + H(+). Its pathway is metabolic intermediate biosynthesis; chorismate biosynthesis; chorismate from D-erythrose 4-phosphate and phosphoenolpyruvate: step 5/7. In terms of biological role, catalyzes the specific phosphorylation of the 3-hydroxyl group of shikimic acid using ATP as a cosubstrate. The chain is Shikimate kinase from Psychromonas ingrahamii (strain DSM 17664 / CCUG 51855 / 37).